A 361-amino-acid polypeptide reads, in one-letter code: Peptide chain release factor 1 (361 aa).

N5-methylglutamine is present on Q235.

The protein belongs to the prokaryotic/mitochondrial release factor family. Methylated by PrmC. Methylation increases the termination efficiency of RF1.

It is found in the cytoplasm. Functionally, peptide chain release factor 1 directs the termination of translation in response to the peptide chain termination codons UAG and UAA. The protein is Peptide chain release factor 1 of Rhodopseudomonas palustris (strain ATCC BAA-98 / CGA009).